Here is a 455-residue protein sequence, read N- to C-terminus: Oxidative stress induced growth inhibitor homolog osgn-1 (455 aa).

Belongs to the OKL38 family. Requires NADPH as cofactor.

It is found in the midbody. Monooxygenase catalytic activity. Involved in regulation of cytokinesis; promotes rho-1/RhoA activity, probably acting locally at the midbody in late cytokinesis. Monooxygenase activity is required to stabilize structures between primordial germ cells (PGCs), termed intercellular bridges. Dispensable for fertility. This chain is Oxidative stress induced growth inhibitor homolog osgn-1, found in Caenorhabditis elegans.